A 128-amino-acid polypeptide reads, in one-letter code: Probable cystatin-15 (128 aa).

Residues 1-20 form the signal peptide; sequence MFWKLPLLLGLLALGPHVCS. Cysteines 82 and 92 form a disulfide. Residue N104 is glycosylated (N-linked (GlcNAc...) asparagine). C105 and C125 are joined by a disulfide.

The protein belongs to the cystatin family.

It localises to the secreted. This Bos taurus (Bovine) protein is Probable cystatin-15.